The primary structure comprises 189 residues: ADP-ribosylation factor H (189 aa).

GTP-binding positions include 34 to 40 (DGAGKST), 75 to 79 (DVGGQ), and 134 to 137 (NKQD).

It belongs to the small GTPase superfamily. Arf family.

It localises to the golgi apparatus. Functionally, GTP-binding protein that may be involved in protein trafficking. May modulate vesicle budding and uncoating within the Golgi apparatus. The chain is ADP-ribosylation factor H (arrH) from Dictyostelium discoideum (Social amoeba).